The following is a 361-amino-acid chain: Peptide chain release factor 1 (361 aa).

Gln-237 carries the N5-methylglutamine modification. Over residues 285–296 the composition is skewed to basic and acidic residues; sequence DEKRRSAEESTR. The disordered stretch occupies residues 285–305; it reads DEKRRSAEESTRRNLVGSGDR.

It belongs to the prokaryotic/mitochondrial release factor family. Methylated by PrmC. Methylation increases the termination efficiency of RF1.

It localises to the cytoplasm. Its function is as follows. Peptide chain release factor 1 directs the termination of translation in response to the peptide chain termination codons UAG and UAA. This Shewanella sediminis (strain HAW-EB3) protein is Peptide chain release factor 1.